We begin with the raw amino-acid sequence, 142 residues long: Large ribosomal subunit protein uL13 (142 aa).

It belongs to the universal ribosomal protein uL13 family. In terms of assembly, part of the 50S ribosomal subunit.

In terms of biological role, this protein is one of the early assembly proteins of the 50S ribosomal subunit, although it is not seen to bind rRNA by itself. It is important during the early stages of 50S assembly. This Leptothrix cholodnii (strain ATCC 51168 / LMG 8142 / SP-6) (Leptothrix discophora (strain SP-6)) protein is Large ribosomal subunit protein uL13.